The following is a 190-amino-acid chain: MDHSHHMGMSYMDSNSTMQPSHHHPTTSASHSHGGGDSSMMMMPMTFYFGFKNVELLFSGLVINTAGEMAGAFVAVFLLAMFYEGLKIARESLLRKSQVSIRYNSMPVPGPNGTILMETHKTVGQQMLSFPHLLQTVLHIIQVVISYFLMLIFMTYNGYLCIAVAAGAGTGYFLFSWKKAVVVDITEHCH.

The tract at residues 1–35 is disordered; the sequence is MDHSHHMGMSYMDSNSTMQPSHHHPTTSASHSHGG. The Extracellular portion of the chain corresponds to 1–61; the sequence is MDHSHHMGMS…KNVELLFSGL (61 aa). A Bis-His motif motif is present at residues 5-6; sequence HH. Residues 7 to 12 carry the Methionine segments (Mets) motif motif; the sequence is MGMSYM. N-linked (GlcNAc...) asparagine glycosylation occurs at Asn15. Low complexity predominate over residues 26–35; that stretch reads TTSASHSHGG. Thr27 is a glycosylation site (O-linked (GalNAc...) threonine). Residues 62–82 form a helical membrane-spanning segment; it reads VINTAGEMAGAFVAVFLLAMF. Over 83–132 the chain is Cytoplasmic; that stretch reads YEGLKIARESLLRKSQVSIRYNSMPVPGPNGTILMETHKTVGQQMLSFPH. Residue Thr114 is modified to Phosphothreonine. Residues 133–153 traverse the membrane as a helical segment; sequence LLQTVLHIIQVVISYFLMLIF. At 154–156 the chain is on the extracellular side; sequence MTY. A helical membrane pass occupies residues 157–177; the sequence is NGYLCIAVAAGAGTGYFLFSW. The Cytoplasmic segment spans residues 178–190; the sequence is KKAVVVDITEHCH. Position 189 is a cysteine sulfenic acid (-SOH) (Cys189).

Belongs to the copper transporter (Ctr) (TC 1.A.56) family. SLC31A subfamily. Homotrimer; is stabilized by cisplatin via interactions between cisplatin and the methionine-rich clusters, and could be crucial for the copper(2+) reduction process and copper(1+) stabilization. Heterotrimer between SLC31A1, CCS and SOD1; this heterotrimer is copper(1+)-mediated and its maintenance is regulated through SOD1 activation. Interacts with KDR; this interaction is induced upon VEGFA stimulation leading to SLC31A1 and KDR subsequent co-internalization to early endosomes, thereby activating KDR downstream signaling in endothelial cells. Interacts (via C-terminal domain) with ATOX1 (via dimer form); this interaction improves ATOX1 stability and controls intracellular copper(1+) levels. Interacts with SLC31A2; this interaction stabilizes SLC31A2 and protects its from ubiquitination and degradation. Interacts (via C-terminal domain) with CCS; this interaction is copper(1+)-mediated. O-Glycosylation at Thr-27 protects from proteolytic cleavage in the N-terminal extracellular domain. Post-translationally, proteolytic cleavage, leading to a truncated form, is facilitated by SLC31A2 and initiated preferentially by CTSL and to a minor extend by CTSB in endolysosomal compartments. In vitro, is cleaved by CTSL/cathepsin L between residues 8 and 9 from the amino terminus. A post-CTSL/cathepsin L processing occurs to yield to the fully truncated form. In terms of processing, sulfenylated at Cys-189 after stimulation with VEGFA, which induces SLC31A1-KDR disulfide bond formation and their co-internalization to early endosomes, driving to a sustained VEGFR2 signaling.

The protein localises to the cell membrane. The protein resides in the early endosome membrane. It is found in the recycling endosome membrane. It localises to the apical cell membrane. Its subcellular location is the late endosome membrane. The protein localises to the basolateral cell membrane. It carries out the reaction Ag(+)(out) = Ag(+)(in). The enzyme catalyses Cu(+)(out) = Cu(+)(in). With respect to regulation, copper(1+) transport is stimulated by extracellular acidic pH and high potassium ions concentrations. Copper(1+) import is regulated by a copper(1+)-dependent recycling of SLC31A1. Functionally, uniporter that mediates the transport of copper(1+) from the extracellular space to the cytoplasm, across the plasma membrane and delivers directly copper(1+) to specific chaperone such as ATOX1, via a copper(1+)- mediated transient interaction between the C-terminal domain and a copper(1+) chaperone, thus controlling intracellular copper(1+) levels. May function in copper(1+) import from the apical membrane thus may drive intestinal copper absorption. The copper(1+) transport mechanism is sodium-independent, saturable and of high-affinity. Also mediates the uptake of silver(1+). May function in the influx of the platinum-containing chemotherapeutic agents. The platinum-containing chemotherapeutic agents uptake is saturable. In vitro, mediates the transport of cadmium(2+) into cells. Also participates in the first step of copper(2+) acquisition by cells through a direct transfer of copper(2+) from copper(2+) carriers in blood, such as ALB to the N-terminal domain of SLC31A1, leading to copper(2+) reduction and probably followed by copper(1+) stabilization. In addition, functions as a redox sensor to promote angiogenesis in endothelial cells, in a copper(1+) transport independent manner, by transmitting the VEGF-induced ROS signal through a sulfenylation at Cys-189 leadin g to a subsequent disulfide bond formation between SLC31A1 and KDR. The SLC31A1-KDR complex is then co-internalized to early endosomes, driving a sustained VEGFR2 signaling. In terms of biological role, mobilizes copper(1+) out of the endosomal compartment, making copper(1+) available for export out of the cells. In Homo sapiens (Human), this protein is High affinity copper uptake protein 1.